Reading from the N-terminus, the 426-residue chain is MRVLFYVFPFVIFALSQAQLISVHVIFRHGARAPVLNVTSEEAKSYFYRGLGQLTDVCIEQAKLIGKVLKDRYVNTFVDARMLPTQLLFRSSPVERCLMTIQTVGNTMFVNSTPPVQTVAKPDDFLLVPKLDCAFQIDEWTNFFNLTENDKKQAKKNPWFISEKALRRATAASQTLQQRSDENLPALILEKDAGLAVPSWFNEEAYKESLTVFYKALAVMSSVGEYKSSKGIRVKTGLLLDKILNDIQEKVRCHEKNQKGHISCDRHKLQVFSTHDLLILPFLDALGIREAALGEDLPPKFLSAIIIETMLLDDIPFVKVFYRGDPRDITLRDMTGLVRNCPPNQALCPVNLFTSCCGEFITADPRRECYEEKADQQLHNWTMTTVSWILIGISAFLLIILIIMSYLAVRYKNRSVVTIKKVCLEN.

Residues M1–A18 form the signal peptide. Residues Q19–W388 are Extracellular-facing. H29 acts as the Nucleophile in catalysis. N37 and N145 each carry an N-linked (GlcNAc...) asparagine glycan. C133 and C369 are oxidised to a cystine. D276 serves as the catalytic Proton donor. N-linked (GlcNAc...) asparagine glycosylation occurs at N380. Residues I389–V409 traverse the membrane as a helical segment. Over R410–N426 the chain is Cytoplasmic.

The protein belongs to the histidine acid phosphatase family.

It is found in the membrane. The catalysed reaction is a phosphate monoester + H2O = an alcohol + phosphate. The protein is Putative acid phosphatase 1 of Caenorhabditis briggsae.